Consider the following 78-residue polypeptide: DNA-directed RNA polymerase subunit Rpo5 (78 aa).

This sequence belongs to the archaeal Rpo5/eukaryotic RPB5 RNA polymerase subunit family. As to quaternary structure, part of the RNA polymerase complex.

The protein resides in the cytoplasm. The catalysed reaction is RNA(n) + a ribonucleoside 5'-triphosphate = RNA(n+1) + diphosphate. DNA-dependent RNA polymerase (RNAP) catalyzes the transcription of DNA into RNA using the four ribonucleoside triphosphates as substrates. The polypeptide is DNA-directed RNA polymerase subunit Rpo5 (Methanothrix thermoacetophila (strain DSM 6194 / JCM 14653 / NBRC 101360 / PT) (Methanosaeta thermophila)).